The primary structure comprises 219 residues: Thymidylate kinase (219 aa).

10–17 (GLEGAGKT) is an ATP binding site.

This sequence belongs to the thymidylate kinase family.

It catalyses the reaction dTMP + ATP = dTDP + ADP. Functionally, phosphorylation of dTMP to form dTDP in both de novo and salvage pathways of dTTP synthesis. The protein is Thymidylate kinase of Pectobacterium carotovorum subsp. carotovorum (strain PC1).